We begin with the raw amino-acid sequence, 232 residues long: Succinyl-CoA:3-ketoacid coenzyme A transferase subunit A (232 aa).

A CoA-binding site is contributed by 24-30 (GGFGLCG).

Belongs to the 3-oxoacid CoA-transferase subunit A family. Heterodimer of a subunit A and a subunit B.

It carries out the reaction a 3-oxo acid + succinyl-CoA = a 3-oxoacyl-CoA + succinate. The protein is Succinyl-CoA:3-ketoacid coenzyme A transferase subunit A (scoA) of Helicobacter pylori (strain J99 / ATCC 700824) (Campylobacter pylori J99).